The primary structure comprises 161 residues: Protein ilm1 (161 aa).

At 1 to 6 (MLFSFR) the chain is on the cytoplasmic side. A helical transmembrane segment spans residues 7–27 (AIVLFYCCMLTFAGIGFLWNP). Topologically, residues 28-56 (KFVVESGLVALIGASMEVKPLIVTQDNLS) are lumenal. Residues 57-77 (TLALSGLVFLILGMIYTISLL) form a helical membrane-spanning segment. Over 78-81 (QSNF) the chain is Cytoplasmic. A helical membrane pass occupies residues 82 to 102 (LFFSGITPIRAIFDFILTGFI). At 103–112 (YLKKEHIASN) the chain is on the lumenal side. Residues 113–133 (SLTFTFAFCDLMWQFWMFAAM) form a helical membrane-spanning segment. Residues 134 to 161 (SEERAKYLKNQKKAEELAARKAREVEES) are Cytoplasmic-facing.

The protein belongs to the ILM1 family.

Its subcellular location is the endoplasmic reticulum. The protein localises to the membrane. The chain is Protein ilm1 from Schizosaccharomyces pombe (strain 972 / ATCC 24843) (Fission yeast).